We begin with the raw amino-acid sequence, 437 residues long: tRNA-2-methylthio-N(6)-dimethylallyladenosine synthase (437 aa).

An MTTase N-terminal domain is found at 1-115 (MKVYIETMGC…ISQVIHKEKA (115 aa)). The [4Fe-4S] cluster site is built by C10, C46, C78, C148, C152, and C155. The Radical SAM core domain maps to 134-367 (KKAQIRSLLN…QNRHKEILEE (234 aa)). The region spanning 370–436 (KLEVGKTHVV…KGRLIAAIKG (67 aa)) is the TRAM domain.

It belongs to the methylthiotransferase family. MiaB subfamily. As to quaternary structure, monomer. The cofactor is [4Fe-4S] cluster.

The protein localises to the cytoplasm. It catalyses the reaction N(6)-dimethylallyladenosine(37) in tRNA + (sulfur carrier)-SH + AH2 + 2 S-adenosyl-L-methionine = 2-methylsulfanyl-N(6)-dimethylallyladenosine(37) in tRNA + (sulfur carrier)-H + 5'-deoxyadenosine + L-methionine + A + S-adenosyl-L-homocysteine + 2 H(+). In terms of biological role, catalyzes the methylthiolation of N6-(dimethylallyl)adenosine (i(6)A), leading to the formation of 2-methylthio-N6-(dimethylallyl)adenosine (ms(2)i(6)A) at position 37 in tRNAs that read codons beginning with uridine. This Helicobacter pylori (strain P12) protein is tRNA-2-methylthio-N(6)-dimethylallyladenosine synthase.